We begin with the raw amino-acid sequence, 946 residues long: Protein translocase subunit SecA (946 aa).

ATP-binding positions include glutamine 87, 105–109 (GEGKT), and aspartate 524. Residues 905–926 (APASDAAQRDPKNPASWGKIGR) form a disordered region. Zn(2+) contacts are provided by cysteine 930, cysteine 932, cysteine 941, and histidine 942.

This sequence belongs to the SecA family. In terms of assembly, monomer and homodimer. Part of the essential Sec protein translocation apparatus which comprises SecA, SecYEG and auxiliary proteins SecDF-YajC and YidC. Requires Zn(2+) as cofactor.

It localises to the cell inner membrane. The protein localises to the cytoplasm. It catalyses the reaction ATP + H2O + cellular proteinSide 1 = ADP + phosphate + cellular proteinSide 2.. In terms of biological role, part of the Sec protein translocase complex. Interacts with the SecYEG preprotein conducting channel. Has a central role in coupling the hydrolysis of ATP to the transfer of proteins into and across the cell membrane, serving both as a receptor for the preprotein-SecB complex and as an ATP-driven molecular motor driving the stepwise translocation of polypeptide chains across the membrane. The protein is Protein translocase subunit SecA of Bradyrhizobium diazoefficiens (strain JCM 10833 / BCRC 13528 / IAM 13628 / NBRC 14792 / USDA 110).